The primary structure comprises 269 residues: MSYEIKICDILKGAAMEGQYKGAQRGAKCEEIANELTRRGVKNNKGEVITKGGVSHWLEGRREPNFDTLAELCDMFGVYALMPMRGGKWIRVHPEDRGEMELREAVAERDAIIDDLKARIAELEAALANKQVPAEAEEMGGEKVEEVAAEQAPNDEKEMGAKEWVNPNPKKYSVGMLCQVLAAMGGEYLGNNAGLQQKITVLDNDGNRKPISNGAFYRLIEQAKGRGLISVEQEIKHKKDENGNQIGKGKKGDKLITLLPNWIDKLGDE.

This is an uncharacterized protein from Escherichia coli (strain K12).